Consider the following 250-residue polypeptide: Small ribosomal subunit protein uS2 (250 aa).

It belongs to the universal ribosomal protein uS2 family.

This is Small ribosomal subunit protein uS2 from Delftia acidovorans (strain DSM 14801 / SPH-1).